The sequence spans 286 residues: Pollen allergen Phl p 5a (286 aa).

Positions 1–34 (ADLGYGPATPAAPAAGYTPATPAAPAGADAAGKA) are enriched in low complexity. The interval 1–35 (ADLGYGPATPAAPAAGYTPATPAAPAGADAAGKAT) is disordered.

Belongs to the Poa p IX/Phl p VI allergen family.

The protein resides in the secreted. The chain is Pollen allergen Phl p 5a from Phleum pratense (Common timothy).